Here is a 175-residue protein sequence, read N- to C-terminus: Isopentenyl-diphosphate Delta-isomerase (175 aa).

Positions 22 and 29 each coordinate Mn(2+). The region spanning 27–160 (KLHRAFSVLL…PAAYTPWLAE (134 aa)) is the Nudix hydrolase domain. Cys-64 is an active-site residue. Cys-64 lines the Mg(2+) pocket. Residue His-66 participates in Mn(2+) binding. Glu-84 contributes to the Mg(2+) binding site. Mn(2+) contacts are provided by Glu-110 and Glu-112. Glu-112 is a catalytic residue.

Belongs to the IPP isomerase type 1 family. The cofactor is Mg(2+). Mn(2+) is required as a cofactor.

Its subcellular location is the cytoplasm. The catalysed reaction is isopentenyl diphosphate = dimethylallyl diphosphate. Its pathway is isoprenoid biosynthesis; dimethylallyl diphosphate biosynthesis; dimethylallyl diphosphate from isopentenyl diphosphate: step 1/1. Catalyzes the 1,3-allylic rearrangement of the homoallylic substrate isopentenyl (IPP) to its highly electrophilic allylic isomer, dimethylallyl diphosphate (DMAPP). The chain is Isopentenyl-diphosphate Delta-isomerase from Nocardia farcinica (strain IFM 10152).